Reading from the N-terminus, the 287-residue chain is 4-diphosphocytidyl-2-C-methyl-D-erythritol kinase (287 aa).

Lys-10 is an active-site residue. An ATP-binding site is contributed by 94–104 (PVAAGLGGGSA). Asp-136 is an active-site residue.

Belongs to the GHMP kinase family. IspE subfamily.

It catalyses the reaction 4-CDP-2-C-methyl-D-erythritol + ATP = 4-CDP-2-C-methyl-D-erythritol 2-phosphate + ADP + H(+). Its pathway is isoprenoid biosynthesis; isopentenyl diphosphate biosynthesis via DXP pathway; isopentenyl diphosphate from 1-deoxy-D-xylulose 5-phosphate: step 3/6. Functionally, catalyzes the phosphorylation of the position 2 hydroxy group of 4-diphosphocytidyl-2C-methyl-D-erythritol. The protein is 4-diphosphocytidyl-2-C-methyl-D-erythritol kinase of Pelotomaculum thermopropionicum (strain DSM 13744 / JCM 10971 / SI).